A 636-amino-acid polypeptide reads, in one-letter code: Ligand-gated ion channel 4 (636 aa).

An N-terminal signal peptide occupies residues 1-25; the sequence is MVICHSCTTFCILLVIDLVPCRIVG. Topologically, residues 26 to 326 are extracellular; that stretch reads MENVENRVMF…IHMHRRPLFY (301 aa). Asparagine 45, asparagine 141, asparagine 179, and asparagine 227 each carry an N-linked (GlcNAc...) asparagine glycan. Cysteine 240 and cysteine 254 form a disulfide bridge. An N-linked (GlcNAc...) asparagine glycan is attached at asparagine 284. The next 3 membrane-spanning stretches (helical) occupy residues 327–347, 357–377, and 383–403; these read VFNH…GFLM, MIIT…ESIP, and VPLI…ATCV. Over 404 to 602 the chain is Cytoplasmic; sequence NVITLNMHRN…QLASVVDRLL (199 aa). Residues 603 to 623 traverse the membrane as a helical segment; it reads LCLFCTATLFTIICLLIVPVV.

This sequence belongs to the ligand-gated ion channel (TC 1.A.9) family.

Its subcellular location is the postsynaptic cell membrane. The protein resides in the cell membrane. In terms of biological role, acetylcholine receptor. The chain is Ligand-gated ion channel 4 from Caenorhabditis briggsae.